Reading from the N-terminus, the 476-residue chain is Glutamate--tRNA ligase 1 (476 aa).

The 'HIGH' region motif lies at 9–19 (PSPTGFLHIGG). The 'KMSKS' region signature appears at 238 to 242 (KLSKR). Lys241 is a binding site for ATP.

This sequence belongs to the class-I aminoacyl-tRNA synthetase family. Glutamate--tRNA ligase type 1 subfamily. As to quaternary structure, monomer.

It localises to the cytoplasm. The catalysed reaction is tRNA(Glu) + L-glutamate + ATP = L-glutamyl-tRNA(Glu) + AMP + diphosphate. In terms of biological role, catalyzes the attachment of glutamate to tRNA(Glu) in a two-step reaction: glutamate is first activated by ATP to form Glu-AMP and then transferred to the acceptor end of tRNA(Glu). The polypeptide is Glutamate--tRNA ligase 1 (Bartonella bacilliformis (strain ATCC 35685 / KC583 / Herrer 020/F12,63)).